Reading from the N-terminus, the 493-residue chain is Glycerol kinase (493 aa).

Residue Thr13 participates in ADP binding. ATP contacts are provided by Thr13, Thr14, and Ser15. Thr13 serves as a coordination point for sn-glycerol 3-phosphate. Arg17 lines the ADP pocket. The sn-glycerol 3-phosphate site is built by Arg83, Glu84, Tyr135, and Asp244. 5 residues coordinate glycerol: Arg83, Glu84, Tyr135, Asp244, and Gln245. Residues Thr266 and Gly309 each coordinate ADP. ATP is bound by residues Thr266, Gly309, Gln313, and Gly410. ADP-binding residues include Gly410 and Asn414.

The protein belongs to the FGGY kinase family.

The catalysed reaction is glycerol + ATP = sn-glycerol 3-phosphate + ADP + H(+). It participates in polyol metabolism; glycerol degradation via glycerol kinase pathway; sn-glycerol 3-phosphate from glycerol: step 1/1. Inhibited by fructose 1,6-bisphosphate (FBP). Functionally, key enzyme in the regulation of glycerol uptake and metabolism. Catalyzes the phosphorylation of glycerol to yield sn-glycerol 3-phosphate. The protein is Glycerol kinase of Shewanella halifaxensis (strain HAW-EB4).